Consider the following 165-residue polypeptide: Minor capsid protein VP2 (165 aa).

It belongs to the sapovirus VP2 family. Homooligomer. The portal-like structure consists in 12 copies of VP2. Interacts with capsid protein VP1.

The protein localises to the virion. Its subcellular location is the host cytoplasm. In terms of biological role, minor structural protein that forms a portal-like structure at a unique three-fold axis of symmetry, following binding to the host receptor. The channel formed by VP2 may allow the delivery of the viral genome through the host endosomal membrane. The protein is Minor capsid protein VP2 of Homo sapiens (Human).